A 431-amino-acid chain; its full sequence is MLRIITQLTDLRAELRRICDRTDSGEMSEQQATVEAILRRVAKDGDRALIEYTAQFDHIDLTPETLRVKGDELDAAYQQVSKELLDAIRLAKQQIEAFHRQRVPKSWVQFGEDGVVLGKRYTAVDAAGLYVPGGRAAYPSTVLMNAIPAQVAGVQRIVMVTPPGQGKGINPAVLVAAQEAGIQEIYRVGGAQAIAALAYGTETIPRVDVITGPGNLYVMLAKKQVYGRVGIDSLAGPSEVLIIADEAAHPAQIAADLLAQAEHDPLAAAILLTPSLSLAKAVVTAVNEQLADHPRRVLTEKAIAHYGLIGIVETLEQAVELSNSFAPEHLELEVEDPWSLVEQVRHAGAIFLGYSTPEAVGDYLAGPNHTLPTSGAARYASALGVETFLKHSSIIQYTPAALRKQGGAVMTLAETEGLISHRDSVRLRLQP.

Tyr130, Gln192, and Asn215 together coordinate NAD(+). Residues Ser238, Gln260, and His263 each coordinate substrate. Gln260 and His263 together coordinate Zn(2+). Residues Glu328 and His329 each act as proton acceptor in the active site. The substrate site is built by His329, Asp362, Glu416, and His421. Asp362 contacts Zn(2+). Residue His421 coordinates Zn(2+).

This sequence belongs to the histidinol dehydrogenase family. The cofactor is Zn(2+).

The catalysed reaction is L-histidinol + 2 NAD(+) + H2O = L-histidine + 2 NADH + 3 H(+). It functions in the pathway amino-acid biosynthesis; L-histidine biosynthesis; L-histidine from 5-phospho-alpha-D-ribose 1-diphosphate: step 9/9. In terms of biological role, catalyzes the sequential NAD-dependent oxidations of L-histidinol to L-histidinaldehyde and then to L-histidine. The chain is Histidinol dehydrogenase from Thermosynechococcus vestitus (strain NIES-2133 / IAM M-273 / BP-1).